The sequence spans 483 residues: Zinc metalloproteinase/disintegrin (483 aa).

A signal peptide spans 1–20 (MIQVLLVTLCLAAFPYQGSS). Residues 21–190 (IILESGNVND…KKASQLNLTP (170 aa)) constitute a propeptide that is removed on maturation. Positions 198-394 (RYIELVVVAD…HNPQCMLNEP (197 aa)) constitute a Peptidase M12B domain. 2 residues coordinate Ca(2+): Glu-201 and Asp-285. Cystine bridges form between Cys-309–Cys-389, Cys-349–Cys-373, and Cys-351–Cys-356. His-334 contacts Zn(2+). Residue Glu-335 is part of the active site. 2 residues coordinate Zn(2+): His-338 and His-344. Residues Cys-389 and Asn-392 each contribute to the Ca(2+) site. The propeptide occupies 395–418 (LRTDIVSTPVSGNELLETGEESDF). Positions 402-483 (TPVSGNELLE…AGCPRNPFHA (82 aa)) constitute a Disintegrin domain. Intrachain disulfides connect Cys-425–Cys-448, Cys-439–Cys-445, Cys-444–Cys-469, and Cys-457–Cys-476. Positions 461–463 (RGD) match the Cell attachment site motif.

The protein belongs to the venom metalloproteinase (M12B) family. P-II subfamily. P-IId sub-subfamily. Homodimer; disulfide-linked (disintegrin). Zn(2+) serves as cofactor. As to expression, expressed by the venom gland.

It is found in the secreted. Impairs hemostasis in the envenomed animal. This protein has not been identified in the venom. Functionally, inhibits ADP-induced platelet aggregation. Binds and inhibits integrins GPIIb/GPIIIa (ITGA2B/ITGB3), alpha-5/beta-1 (ITGA5/ITGB1), alpha-V/beta-3 (ITGAV/ITGB3), and alpha-V/beta-5 (ITGAV/ITGB5). It blocks cancer cell adhesion (tested on human breast cancer cell line MDA-MB-435) to fibronectin and vitronectin and thus prevents invasion of cancer cells. The chain is Zinc metalloproteinase/disintegrin from Agkistrodon contortrix contortrix (Southern copperhead).